We begin with the raw amino-acid sequence, 443 residues long: ATP-dependent protease ATPase subunit HslU (443 aa).

Residues Ile-18, 60-65, Asp-256, Glu-321, and Arg-393 contribute to the ATP site; that span reads GVGKTE.

This sequence belongs to the ClpX chaperone family. HslU subfamily. As to quaternary structure, a double ring-shaped homohexamer of HslV is capped on each side by a ring-shaped HslU homohexamer. The assembly of the HslU/HslV complex is dependent on binding of ATP.

The protein localises to the cytoplasm. Its function is as follows. ATPase subunit of a proteasome-like degradation complex; this subunit has chaperone activity. The binding of ATP and its subsequent hydrolysis by HslU are essential for unfolding of protein substrates subsequently hydrolyzed by HslV. HslU recognizes the N-terminal part of its protein substrates and unfolds these before they are guided to HslV for hydrolysis. The protein is ATP-dependent protease ATPase subunit HslU of Histophilus somni (strain 2336) (Haemophilus somnus).